Consider the following 355-residue polypeptide: Cyanide hydratase (355 aa).

In terms of domain architecture, CN hydrolase spans 6–286; sequence YKAAAVTSEP…GLLFVDIDLN (281 aa). The Proton acceptor role is filled by glutamate 46. The active site involves lysine 128. Cysteine 163 acts as the Nucleophile in catalysis.

It belongs to the carbon-nitrogen hydrolase superfamily. Nitrilase family. Oligomer of dimers, forming left-handed helical fibers.

It carries out the reaction formamide = hydrogen cyanide + H2O. Functionally, catalyzes the hydration of cyanide to formamide. Degradation of cyanide may be important for plant pathogenic fungi in infection of cyanogenic plants. Also has low but significant nitrilase activity with acetonitrile, propionitrile and benzonitrile. The sequence is that of Cyanide hydratase from Gibberella baccata (Fusarium lateritium).